We begin with the raw amino-acid sequence, 279 residues long: Putative ABC transporter ATP-binding protein CA_C1368 (279 aa).

The ABC transporter domain maps to 4–239 (ISINNVDYIY…KKVLRNINLR (236 aa)). 37–44 (GPNGAGKS) contacts ATP.

It belongs to the ABC transporter superfamily.

Its subcellular location is the cell membrane. In terms of biological role, probably part of an ABC transporter complex. Responsible for energy coupling to the transport system. In Clostridium acetobutylicum (strain ATCC 824 / DSM 792 / JCM 1419 / IAM 19013 / LMG 5710 / NBRC 13948 / NRRL B-527 / VKM B-1787 / 2291 / W), this protein is Putative ABC transporter ATP-binding protein CA_C1368.